A 244-amino-acid chain; its full sequence is Heat shock transcription factor (244 aa).

Residues 13–108 (IPKFIMKLYK…LLGFDDSLRM (96 aa)) mediate DNA binding. The segment at 123 to 168 (DGSLKEIVEYLYVQNQELYTELSVCKERIERQERALNGLIEILSRV) is involved in trimerization. A disordered region spans residues 204 to 244 (EGCEPASPPLQDKGIPELSFKPGGIPHADSDTKDDNYDPFF). Over residues 231-244 (ADSDTKDDNYDPFF) the composition is skewed to basic and acidic residues.

This sequence belongs to the HSF family. In terms of assembly, homotrimer. Homotrimerization increases the affinity of HSF1 to DNA.

The protein resides in the nucleus. DNA-binding transcription factor that specifically binds heat shock promoter elements (HSE) and activates transcription. This is Heat shock transcription factor from Encephalitozoon cuniculi (strain GB-M1) (Microsporidian parasite).